Here is a 1551-residue protein sequence, read N- to C-terminus: UDP-glucose:glycoprotein glucosyltransferase 1 (1551 aa).

A signal peptide spans 1–42 (MCSRGDANTADAAAARRVTGLRYNMRLLIALALPCLFSLAEA). 3 N-linked (GlcNAc...) asparagine glycosylation sites follow: Asn269, Asn536, and Asn1228. The segment at 1244-1551 (KAEEVKQDKD…QEGSQKHEEL (308 aa)) is glucosyltransferase. Ser1277 carries the post-translational modification Phosphoserine. The tract at residues 1531 to 1551 (KELGTLHTEETQEGSQKHEEL) is disordered. Residues 1548–1551 (HEEL) carry the Prevents secretion from ER motif.

This sequence belongs to the glycosyltransferase 8 family. Monomer as well as in a tight complex with SELENOF. Interacts with METTL23. Part of a large chaperone multiprotein complex comprising DNAJB11, HSP90B1, HSPA5, HYOU, PDIA2, PDIA4, PDIA6, PPIB, SDF2L1, UGGT1 and very small amounts of ERP29, but not, or at very low levels, CALR nor CANX. The cofactor is Ca(2+). Mn(2+) is required as a cofactor.

It localises to the endoplasmic reticulum lumen. Its subcellular location is the endoplasmic reticulum-Golgi intermediate compartment. It carries out the reaction N(4)-(alpha-D-Man-(1-&gt;2)-alpha-D-Man-(1-&gt;2)-alpha-D-Man-(1-&gt;3)-[alpha-D-Man-(1-&gt;2)-alpha-D-Man-(1-&gt;3)-[alpha-D-Man-(1-&gt;2)-alpha-D-Man-(1-&gt;6)]-alpha-D-Man-(1-&gt;6)]-beta-D-Man-(1-&gt;4)-beta-D-GlcNAc-(1-&gt;4)-beta-D-GlcNAc)-L-asparaginyl-[protein] (N-glucan mannose isomer 9A1,2,3B1,2,3) + UDP-alpha-D-glucose = N(4)-(alpha-D-Glc-(1-&gt;3)-alpha-D-Man-(1-&gt;2)-alpha-D-Man-(1-&gt;2)-alpha-D-Man-(1-&gt;3)-[alpha-D-Man-(1-&gt;2)-alpha-D-Man-(1-&gt;3)-[alpha-D-Man-(1-&gt;2)-alpha-D-Man-(1-&gt;6)]-alpha-D-Man-(1-&gt;6)]-beta-D-Man-(1-&gt;4)-beta-D-GlcNAc-(1-&gt;4)-beta-D-GlcNAc)-L-asparaginyl-[protein] + UDP + H(+). It participates in protein modification; protein glycosylation. Its function is as follows. Recognizes glycoproteins with minor folding defects. Reglucosylates single N-glycans near the misfolded part of the protein, thus providing quality control for protein folding in the endoplasmic reticulum. Reglucosylated proteins are recognized by calreticulin for recycling to the endoplasmic reticulum and refolding or degradation. The chain is UDP-glucose:glycoprotein glucosyltransferase 1 (Uggt1) from Mus musculus (Mouse).